We begin with the raw amino-acid sequence, 453 residues long: MERSSLAVILAAGDSTRMKSSKSKVLHPVAGRPMIGHVVEAVAGAGVGAVALVVGRDADNVAAAASLKGLQVEAFLQKERKGTGHAVLAAREAIKRGFDDVIVAYGDVPLITSATLDRAREAIAAGADVAVIGFHTDRPTGYGRLLVENGELVAIREEKDATDEERKVTWCNSGLMAINGRNALDLLDRIGNSNVKGEYYLTDVVEIARSLGRRAIAIDAPEKELTGCNNRAELAFIERLWQERRRHELMVDGVSMIAPETVFLSFDTKIGQDVLIEPNVVFGPGVTIEPGAIVHAFSHLEGAHLAEGAVVGPFARLRPGANLHANAKVGNFCEVKKAEIGEGAKVNHLTYIGDAFVGAGSNIGAGAITCNYDGYNKSETRIGANSFIGSNSSLVAPVTIGERAYIASGSVITDDVPADALAFGRARQEVKPGRAVALRERAKAQKEAKKKSS.

A pyrophosphorylase region spans residues 1–231 (MERSSLAVIL…EKELTGCNNR (231 aa)). Residues 10–13 (LAAG), Lys24, Gln77, 82–83 (GT), 105–107 (YGD), Gly143, Glu157, Asn172, and Asn229 each bind UDP-N-acetyl-alpha-D-glucosamine. Asp107 serves as a coordination point for Mg(2+). Asn229 provides a ligand contact to Mg(2+). The segment at 232–252 (AELAFIERLWQERRRHELMVD) is linker. Residues 253–453 (GVSMIAPETV…AQKEAKKKSS (201 aa)) form an N-acetyltransferase region. The UDP-N-acetyl-alpha-D-glucosamine site is built by Arg318 and Lys336. The active-site Proton acceptor is the His348. Residues Tyr351 and Asn362 each contribute to the UDP-N-acetyl-alpha-D-glucosamine site. Acetyl-CoA is bound by residues Ala365, 371–372 (NY), Ser390, Ser408, and Arg425.

The protein in the N-terminal section; belongs to the N-acetylglucosamine-1-phosphate uridyltransferase family. It in the C-terminal section; belongs to the transferase hexapeptide repeat family. As to quaternary structure, homotrimer. Requires Mg(2+) as cofactor.

It localises to the cytoplasm. It carries out the reaction alpha-D-glucosamine 1-phosphate + acetyl-CoA = N-acetyl-alpha-D-glucosamine 1-phosphate + CoA + H(+). It catalyses the reaction N-acetyl-alpha-D-glucosamine 1-phosphate + UTP + H(+) = UDP-N-acetyl-alpha-D-glucosamine + diphosphate. The protein operates within nucleotide-sugar biosynthesis; UDP-N-acetyl-alpha-D-glucosamine biosynthesis; N-acetyl-alpha-D-glucosamine 1-phosphate from alpha-D-glucosamine 6-phosphate (route II): step 2/2. It participates in nucleotide-sugar biosynthesis; UDP-N-acetyl-alpha-D-glucosamine biosynthesis; UDP-N-acetyl-alpha-D-glucosamine from N-acetyl-alpha-D-glucosamine 1-phosphate: step 1/1. It functions in the pathway bacterial outer membrane biogenesis; LPS lipid A biosynthesis. In terms of biological role, catalyzes the last two sequential reactions in the de novo biosynthetic pathway for UDP-N-acetylglucosamine (UDP-GlcNAc). The C-terminal domain catalyzes the transfer of acetyl group from acetyl coenzyme A to glucosamine-1-phosphate (GlcN-1-P) to produce N-acetylglucosamine-1-phosphate (GlcNAc-1-P), which is converted into UDP-GlcNAc by the transfer of uridine 5-monophosphate (from uridine 5-triphosphate), a reaction catalyzed by the N-terminal domain. This is Bifunctional protein GlmU from Agrobacterium fabrum (strain C58 / ATCC 33970) (Agrobacterium tumefaciens (strain C58)).